The following is a 38-amino-acid chain: Small ribosomal subunit protein eS32 (38 aa).

Belongs to the eukaryotic ribosomal protein eS32 family. Component of the small ribosomal subunit (SSU).

The chain is Small ribosomal subunit protein eS32 (rpl41e) from Methanocaldococcus jannaschii (strain ATCC 43067 / DSM 2661 / JAL-1 / JCM 10045 / NBRC 100440) (Methanococcus jannaschii).